Consider the following 340-residue polypeptide: Ribonucleoside-diphosphate reductase small subunit (340 aa).

A helical transmembrane segment spans residues 180-200; the sequence is FILMILIEGIFFAASFAAIAY.

The protein belongs to the ribonucleoside diphosphate reductase small chain family. In terms of assembly, heterotetramer composed of a homodimer of the large subunit (R1) and a homodimer of the small subunit (R2). Larger multisubunit protein complex are also active, composed of (R1)n(R2)n. Fe cation serves as cofactor.

It is found in the host membrane. The enzyme catalyses a 2'-deoxyribonucleoside 5'-diphosphate + [thioredoxin]-disulfide + H2O = a ribonucleoside 5'-diphosphate + [thioredoxin]-dithiol. In terms of biological role, ribonucleoside-diphosphate reductase holoenzyme provides the precursors necessary for viral DNA synthesis. Allows virus growth in non-dividing cells, as well as reactivation from latency in infected hosts. Catalyzes the biosynthesis of deoxyribonucleotides from the corresponding ribonucleotides. In Human herpesvirus 1 (strain 17) (HHV-1), this protein is Ribonucleoside-diphosphate reductase small subunit.